We begin with the raw amino-acid sequence, 329 residues long: Endonuclease 8-like 2 (329 aa).

The Schiff-base intermediate with DNA role is filled by P2. E3 (proton donor) is an active-site residue. The active-site Proton donor; for beta-elimination activity is K50. N6-acetyllysine is present on K50. At S68 the chain carries Phosphoserine. The segment at 68–116 is disordered; sequence SLLSEPLREGEQKDKARHHQEASDPSSWSPGGDSAVPSGDDGLQCLGGD. Residues 73–89 are compositionally biased toward basic and acidic residues; sequence PLREGEQKDKARHHQEA. A compositionally biased stretch (low complexity) spans 90-102; sequence SDPSSWSPGGDSA. The residue at position 149 (K149) is an N6-acetyllysine. N227 is a binding site for DNA. An FPG-type zinc finger spans residues 280-316; it reads QIYQKEQCPAGHQVVRESLGPPGGFQRLTWWCPQCQP. The active-site Proton donor; for delta-elimination activity is the R306.

The protein belongs to the FPG family. In terms of assembly, binds EP300.

Its subcellular location is the nucleus. The catalysed reaction is 2'-deoxyribonucleotide-(2'-deoxyribose 5'-phosphate)-2'-deoxyribonucleotide-DNA = a 3'-end 2'-deoxyribonucleotide-(2,3-dehydro-2,3-deoxyribose 5'-phosphate)-DNA + a 5'-end 5'-phospho-2'-deoxyribonucleoside-DNA + H(+). Acetylation of Lys-50 leads to loss of DNA nicking activity. Functionally, involved in base excision repair of DNA damaged by oxidation or by mutagenic agents. Has DNA glycosylase activity towards 5-hydroxyuracil and other oxidized derivatives of cytosine with a preference for mismatched double-stranded DNA (DNA bubbles). Has low or no DNA glycosylase activity towards thymine glycol, 2-hydroxyadenine, hypoxanthine and 8-oxoguanine. Has AP (apurinic/apyrimidinic) lyase activity and introduces nicks in the DNA strand. Cleaves the DNA backbone by beta-delta elimination to generate a single-strand break at the site of the removed base with both 3'- and 5'-phosphates. The chain is Endonuclease 8-like 2 (NEIL2) from Bos taurus (Bovine).